A 544-amino-acid polypeptide reads, in one-letter code: Aspartokinase 2, chloroplastic (544 aa).

The N-terminal 84 residues, 1 to 84, are a transit peptide targeting the chloroplast; that stretch reads MASLQLYGVK…SSGTGKELTC (84 aa). Residues lysine 87, glycine 90, and serine 119 each contribute to the ATP site. Residue glutamate 203 participates in substrate binding. 2 ACT domains span residues 401–479 and 481–544; these read IAST…RRSI and SLIG…ETDP.

It belongs to the aspartokinase family. As to expression, expressed in stems, leaves, floral organs and young seedlings.

It is found in the plastid. The protein localises to the chloroplast. The catalysed reaction is L-aspartate + ATP = 4-phospho-L-aspartate + ADP. It participates in amino-acid biosynthesis; L-lysine biosynthesis via DAP pathway; (S)-tetrahydrodipicolinate from L-aspartate: step 1/4. It functions in the pathway amino-acid biosynthesis; L-methionine biosynthesis via de novo pathway; L-homoserine from L-aspartate: step 1/3. Its pathway is amino-acid biosynthesis; L-threonine biosynthesis; L-threonine from L-aspartate: step 1/5. Its activity is regulated as follows. Allosterically inhibited by lysine, but not by S-adenosyl-L-methionine (SAM). K(0.5) for lysine in the presence of physiological concentrations of substrates is 12.5 uM. No inhibition by threonine or leucine and no activation or inhibition by alanine, cysteine, isoleucine, serine, valine, methionine, glutamine, asparagine, glutamic acid or arginine. Its function is as follows. Involved in the first step of essential amino acids lysine, threonine, methionine and isoleucine synthesis via the aspartate-family pathway. The chain is Aspartokinase 2, chloroplastic (AK2) from Arabidopsis thaliana (Mouse-ear cress).